The primary structure comprises 72 residues: LVMAGVESVKDGYIVDDRNCTYFCGRNAYCNEECTKLKGESGYCQWASPYGNACYCYKVPDHVRTKGPGRCN.

Residues 1-8 (LVMAGVES) form the signal peptide. The LCN-type CS-alpha/beta domain occupies 10–72 (KDGYIVDDRN…VRTKGPGRCN (63 aa)). Cystine bridges form between Cys20–Cys71, Cys24–Cys44, Cys30–Cys54, and Cys34–Cys56. Asn72 bears the Asparagine amide mark.

It belongs to the long (4 C-C) scorpion toxin superfamily. Sodium channel inhibitor family. Alpha subfamily. Post-translationally, when the toxin is not amidated, there are 75% loss of toxicity to mice, and total incapacity to bind rat brain synaptosomes. As to expression, expressed by the venom gland.

Its subcellular location is the secreted. Functionally, alpha toxins bind voltage-independently at site-3 of sodium channels (Nav) and inhibit the inactivation of the activated channels, thereby blocking neuronal transmission. Is active against mammals and binds with high affinity to rat brain synaptosomes. This chain is Alpha-mammal toxin Bot3, found in Buthus occitanus tunetanus (Common European scorpion).